Here is a 302-residue protein sequence, read N- to C-terminus: Nucleotide-binding protein BceJ2315_08000 (302 aa).

8 to 15 (GISGSGKS) serves as a coordination point for ATP. 57–60 (DARS) contacts GTP.

Belongs to the RapZ-like family.

Displays ATPase and GTPase activities. The chain is Nucleotide-binding protein BceJ2315_08000 from Burkholderia cenocepacia (strain ATCC BAA-245 / DSM 16553 / LMG 16656 / NCTC 13227 / J2315 / CF5610) (Burkholderia cepacia (strain J2315)).